A 269-amino-acid polypeptide reads, in one-letter code: Phosphate import ATP-binding protein PstB (269 aa).

In terms of domain architecture, ABC transporter spans Ile22–Ile264. Gly55–Ser62 provides a ligand contact to ATP.

This sequence belongs to the ABC transporter superfamily. Phosphate importer (TC 3.A.1.7) family. In terms of assembly, the complex is composed of two ATP-binding proteins (PstB), two transmembrane proteins (PstC and PstA) and a solute-binding protein (PstS).

It localises to the cell membrane. The enzyme catalyses phosphate(out) + ATP + H2O = ADP + 2 phosphate(in) + H(+). Functionally, part of the ABC transporter complex PstSACB involved in phosphate import. Responsible for energy coupling to the transport system. The polypeptide is Phosphate import ATP-binding protein PstB (Spiroplasma kunkelii).